A 348-amino-acid polypeptide reads, in one-letter code: Inactive rhomboid-related protein 2 (348 aa).

Positions 14–49 (IEASSWIRIFRAFDTDHDGLIQCEEMQKTIRDSTYS) constitute an EF-hand domain. D27, D29, D31, and E38 together coordinate Ca(2+). 7 helical membrane passes run 121 to 141 (PPIFLIFLSIVQLAFYLYYVV), 177 to 197 (LINVGIFHIIFNILIQLAIGV), 207 to 227 (IYILYFMGVLFGSILSLALDP), 229 to 249 (VFLCGGAAGSFSLIASHITTI), 263 to 283 (LPILIVFAALDYVLAVYQRFF), 290 to 310 (VSMYGHLGGLVAGILFTFILF), and 323 to 343 (FWVSLVLSGFFIAICITLIAA).

Belongs to the peptidase S54 family.

It localises to the membrane. Its function is as follows. Probable inactive serine protease. This chain is Inactive rhomboid-related protein 2, found in Caenorhabditis elegans.